The sequence spans 346 residues: MRIAVDAMGGDNAPTIEVEGAVAACREFGIPITLVGDQERLRKELELHHCSGLDIDIFHASEVVGMHDSASDAIRRKKNSSVRLAFELVKEGKACAAVSAGNSGATMAAGMFVLKRIKGIDRPAIAQVFPTLKGKTLVLDIGGTVDCKPIHLAQFAIMGEVYARYVMGIADPVVGLLSNGEEESKGNELTRETNTLLRKTSLNYAGYIEGRDIFKGQIDVVVCDGFVGNIVLKLSEGLADAAGRMLKQEILKSWVSKLGYLFVRGAFKRFRRIVDYAEYGGAPLLGINGVGMICHGGSSVKAIKNAIRLAEEYARNGVAEHVVEKLSENHIESLQRDNAKLQAVGE.

The protein belongs to the PlsX family. In terms of assembly, homodimer. Probably interacts with PlsY.

The protein localises to the cytoplasm. The enzyme catalyses a fatty acyl-[ACP] + phosphate = an acyl phosphate + holo-[ACP]. Its pathway is lipid metabolism; phospholipid metabolism. Functionally, catalyzes the reversible formation of acyl-phosphate (acyl-PO(4)) from acyl-[acyl-carrier-protein] (acyl-ACP). This enzyme utilizes acyl-ACP as fatty acyl donor, but not acyl-CoA. This is Phosphate acyltransferase from Pelobacter propionicus (strain DSM 2379 / NBRC 103807 / OttBd1).